A 350-amino-acid polypeptide reads, in one-letter code: Phosphate acyltransferase (350 aa).

The protein belongs to the PlsX family. As to quaternary structure, homodimer. Probably interacts with PlsY.

The protein localises to the cytoplasm. The catalysed reaction is a fatty acyl-[ACP] + phosphate = an acyl phosphate + holo-[ACP]. The protein operates within lipid metabolism; phospholipid metabolism. Its function is as follows. Catalyzes the reversible formation of acyl-phosphate (acyl-PO(4)) from acyl-[acyl-carrier-protein] (acyl-ACP). This enzyme utilizes acyl-ACP as fatty acyl donor, but not acyl-CoA. The polypeptide is Phosphate acyltransferase (Chelativorans sp. (strain BNC1)).